A 95-amino-acid polypeptide reads, in one-letter code: UPF0358 protein GTNG_0942 (95 aa).

Belongs to the UPF0358 family.

The chain is UPF0358 protein GTNG_0942 from Geobacillus thermodenitrificans (strain NG80-2).